The sequence spans 1336 residues: pre-mRNA 3' end processing protein WDR33 (1336 aa).

Alanine 2 is subject to N-acetylalanine. A Phosphoserine modification is found at serine 7. Lysine 46 bears the N6-acetyllysine mark. WD repeat units follow at residues 117–156 (KVKC…FETI), 159–198 (AHDS…VKMF), 200–239 (AHKE…EERI), 242–283 (GHGA…SLAT), 286–325 (AHKN…EELQ), 329–369 (GHKK…EVGG), and 373–412 (AHEG…DKMR). Residues lysine 526, lysine 530, and lysine 560 each participate in a glycyl lysine isopeptide (Lys-Gly) (interchain with G-Cter in SUMO2) cross-link. The segment at 568-1336 (QVEQIQPPPS…GASRGGGRGR (769 aa)) is disordered. Positions 573 to 590 (QPPPSSGTPLLGPQPFPG) are enriched in pro residues. Residues 594-607 (MSQIPQGFQQPHPS) are compositionally biased toward polar residues. Residues 608–643 (QQMPMNMAQMGPPGPQGQFRPPGPQGQMGPQGPPLH) show a composition bias toward low complexity. One can recognise a Collagen-like domain in the interval 618–770 (GPPGPQGQFR…GPGSQGIQGP (153 aa)). Pro residues predominate over residues 683–695 (PHGPLGPQGPPGP). Composition is skewed to low complexity over residues 696–707 (QGSSGPQGHMGP) and 726–751 (QGHL…GMQG). Omega-N-methylarginine is present on arginine 782. A compositionally biased stretch (low complexity) spans 854 to 869 (GPPGSQSQQGPPQGSL). Arginine 915 carries the post-translational modification Asymmetric dimethylarginine. The span at 932–941 (PGLGQQGAQG) shows a compositional bias: low complexity. Composition is skewed to basic and acidic residues over residues 971–989 (SERR…ERGP) and 998–1034 (GPPD…EFEG). The residue at position 987 (arginine 987) is an Omega-N-methylarginine. Residue arginine 1035 is modified to Omega-N-methylarginine. Basic and acidic residues-rich tracts occupy residues 1056 to 1068 (PDHR…DGRG) and 1078 to 1122 (EGRR…RGRD). Acidic residues predominate over residues 1130-1140 (FGPEENFDASE). A compositionally biased stretch (basic and acidic residues) spans 1141-1150 (EAARGRDLRG). The segment covering 1151–1160 (RGRGTPRGGR) has biased composition (basic residues). Composition is skewed to basic and acidic residues over residues 1169-1217 (EFPR…RERS) and 1242-1259 (SEHR…DRGG). At serine 1210 the chain carries Phosphoserine. The residue at position 1262 (arginine 1262) is an Omega-N-methylarginine. Residues 1281–1293 (DGEHHDGYHRDEP) show a composition bias toward basic and acidic residues. Over residues 1301–1326 (GTPSRGGRSGSNWGRGSNMNSGPPRR) the composition is skewed to low complexity. The residue at position 1315 (arginine 1315) is an Asymmetric dimethylarginine; alternate. Arginine 1315 carries the omega-N-methylarginine; alternate modification.

Belongs to the WD repeat WDR33 family. In terms of assembly, component of the cleavage and polyadenylation specificity factor (CPSF) module of the pre-mRNA 3'-end processing complex. Interacts with CPSF3/CPSF73. As to expression, most highly expressed in testis.

It localises to the nucleus. Essential for both cleavage and polyadenylation of pre-mRNA 3' ends. The sequence is that of pre-mRNA 3' end processing protein WDR33 (WDR33) from Homo sapiens (Human).